A 99-amino-acid chain; its full sequence is A-type ATP synthase subunit F (99 aa).

Belongs to the V-ATPase F subunit family. In terms of assembly, has multiple subunits with at least A(3), B(3), C, D, E, F, H, I and proteolipid K(x).

The protein resides in the cell membrane. Functionally, component of the A-type ATP synthase that produces ATP from ADP in the presence of a proton gradient across the membrane. The protein is A-type ATP synthase subunit F of Methanococcus vannielii (strain ATCC 35089 / DSM 1224 / JCM 13029 / OCM 148 / SB).